We begin with the raw amino-acid sequence, 327 residues long: 7,8-didemethyl-8-hydroxy-5-deazariboflavin synthase (327 aa).

In terms of domain architecture, Radical SAM core spans 6 to 244 (ITFSRNVFLP…EEVAVQVAPN (239 aa)). [4Fe-4S] cluster contacts are provided by Cys20, Cys24, and Cys27.

This sequence belongs to the radical SAM superfamily. CofG family. As to quaternary structure, consists of two subunits, CofG and CofH. [4Fe-4S] cluster serves as cofactor.

The catalysed reaction is 5-amino-5-(4-hydroxybenzyl)-6-(D-ribitylimino)-5,6-dihydrouracil + S-adenosyl-L-methionine = 7,8-didemethyl-8-hydroxy-5-deazariboflavin + 5'-deoxyadenosine + L-methionine + NH4(+) + H(+). It functions in the pathway cofactor biosynthesis; coenzyme F0 biosynthesis. Catalyzes the radical-mediated synthesis of 7,8-didemethyl-8-hydroxy-5-deazariboflavin from 5-amino-5-(4-hydroxybenzyl)-6-(D-ribitylimino)-5,6-dihydrouracil. This chain is 7,8-didemethyl-8-hydroxy-5-deazariboflavin synthase, found in Methanosphaerula palustris (strain ATCC BAA-1556 / DSM 19958 / E1-9c).